Reading from the N-terminus, the 122-residue chain is Serum amyloid A-1 protein (122 aa).

The first 18 residues, methionine 1–serine 18, serve as a signal peptide directing secretion. The important for amyloid formation; forms amyloid fibrils in vitro stretch occupies residues arginine 19–alanine 45. Residues leucine 95–tyrosine 122 constitute a propeptide, often cleaved during amyloidogenesis. The interval glutamine 98–tyrosine 122 is disordered. An N4,N4-dimethylasparagine modification is found at asparagine 101.

It belongs to the SAA family. As to quaternary structure, homohexamer; dimer of trimers. Can form amyloid fibrils after partial proteolysis; the native, undenatured protein does not form amyloid fibrils (in vitro). Apolipoprotein of the HDL complex. Binds to heparin. In terms of processing, this protein is the precursor of amyloid protein A, which is formed by the removal of approximately 24 residues from the C-terminal end. In terms of tissue distribution, expressed by the liver; secreted in plasma (at protein level).

It is found in the secreted. In terms of biological role, major acute phase protein. The polypeptide is Serum amyloid A-1 protein (SAA1) (Homo sapiens (Human)).